Reading from the N-terminus, the 128-residue chain is Small ribosomal subunit protein uS12 (128 aa).

D89 carries the post-translational modification 3-methylthioaspartic acid. Residues 101 to 128 are disordered; it reads SLDTSGVADRRQGRSKYGAKRPKGAAAK. Basic residues predominate over residues 113-128; it reads GRSKYGAKRPKGAAAK.

The protein belongs to the universal ribosomal protein uS12 family. Part of the 30S ribosomal subunit. Contacts proteins S8 and S17. May interact with IF1 in the 30S initiation complex.

Functionally, with S4 and S5 plays an important role in translational accuracy. In terms of biological role, interacts with and stabilizes bases of the 16S rRNA that are involved in tRNA selection in the A site and with the mRNA backbone. Located at the interface of the 30S and 50S subunits, it traverses the body of the 30S subunit contacting proteins on the other side and probably holding the rRNA structure together. The combined cluster of proteins S8, S12 and S17 appears to hold together the shoulder and platform of the 30S subunit. The protein is Small ribosomal subunit protein uS12 of Prosthecochloris aestuarii (strain DSM 271 / SK 413).